Consider the following 205-residue polypeptide: Putative protein phosphatase inhibitor 2-like protein 1 (205 aa).

Disordered regions lie at residues Met1 to Ser44, Gly64 to Thr92, Ala107 to Tyr148, and Val171 to Ser205. Required for binding PPP1CC regions lie at residues Lys12–Asp17 and Lys43–Thr55. Over residues Asp17 to Val26 the composition is skewed to polar residues. A compositionally biased stretch (basic and acidic residues) spans Glu30–Ser44. Thr73 is modified (phosphothreonine; by GSK3). Acidic residues-rich tracts occupy residues Gly80–Thr91 and Ser121–Ser130. Ser87 carries the post-translational modification Phosphoserine; by CK2. Residues Pro131 to Arg144 are compositionally biased toward basic and acidic residues. The required for binding PPP1CC catalytic center, displacing metal ions and inhibition of PPP1CC catalytic activity stretch occupies residues His147 to Glu150. Over residues Ser182 to Ser205 the composition is skewed to polar residues.

The protein belongs to the protein phosphatase inhibitor 2 family.

Its function is as follows. Inhibitor of protein-phosphatase 1. The protein is Putative protein phosphatase inhibitor 2-like protein 1 (PPP1R2P1) of Homo sapiens (Human).